We begin with the raw amino-acid sequence, 60 residues long: Cytotoxin 1 (60 aa).

Cystine bridges form between Cys-3–Cys-21, Cys-14–Cys-38, Cys-42–Cys-53, and Cys-54–Cys-59.

Belongs to the three-finger toxin family. Short-chain subfamily. Type IA cytotoxin sub-subfamily. In terms of assembly, monomer in solution; Homodimer and oligomer in the presence of negatively charged lipids forming a pore with a size ranging between 20 and 30 Angstroms. Expressed by the venom gland.

The protein resides in the secreted. The protein localises to the target cell membrane. Its function is as follows. Shows cytolytic activity on many different cells by forming pore in lipid membranes. In vivo, increases heart rate or kills the animal by cardiac arrest. In addition, it binds to heparin with high affinity, interacts with Kv channel-interacting protein 1 (KCNIP1) in a calcium-independent manner, and binds to integrin alpha-V/beta-3 (ITGAV/ITGB3) with moderate affinity. This is Cytotoxin 1 from Naja naja (Indian cobra).